The chain runs to 462 residues: UDP-N-acetylmuramoylalanine--D-glutamate ligase (462 aa).

112-118 (GTNGKTT) contacts ATP.

The protein belongs to the MurCDEF family.

The protein localises to the cytoplasm. It catalyses the reaction UDP-N-acetyl-alpha-D-muramoyl-L-alanine + D-glutamate + ATP = UDP-N-acetyl-alpha-D-muramoyl-L-alanyl-D-glutamate + ADP + phosphate + H(+). Its pathway is cell wall biogenesis; peptidoglycan biosynthesis. Cell wall formation. Catalyzes the addition of glutamate to the nucleotide precursor UDP-N-acetylmuramoyl-L-alanine (UMA). This chain is UDP-N-acetylmuramoylalanine--D-glutamate ligase, found in Nostoc sp. (strain PCC 7120 / SAG 25.82 / UTEX 2576).